Here is a 398-residue protein sequence, read N- to C-terminus: Cholinephosphotransferase 1 (398 aa).

An N-acetylalanine modification is found at Ala-2. Residues 2 to 62 (AAGAGARPAP…LLQWIPLWMA (61 aa)) lie on the Cytoplasmic side of the membrane. The helical transmembrane segment at 63 to 83 (PNTITLIGLAINLVTTLVLIF) threads the bilayer. Asn-64 provides a ligand contact to CDP-choline. The Lumenal segment spans residues 84–93 (YCPTVTEEAP). Residues 94–118 (YWTYLLCALGLFIYQSLDAIDGKQA) form a helical membrane-spanning segment. Positions 111 and 114 each coordinate Mg(2+). Arg-119 provides a ligand contact to CDP-choline. Over 119-125 (RRTNSCS) the chain is Cytoplasmic. Residues 126-150 (PLGELFDHGCDSLSTVFMAIGASIA) traverse the membrane as a helical segment. Asp-132 lines the Mg(2+) pocket. The Proton acceptor role is filled by His-133. Asp-136 provides a ligand contact to Mg(2+). Topologically, residues 151–160 (VRLGTHPDWL) are lumenal. A helical membrane pass occupies residues 161-179 (FFCSFVGMFMFYCAHWQTY). The Cytoplasmic segment spans residues 180-190 (VSGVLRFGRVD). A helical membrane pass occupies residues 191-207 (VTEIQVALVIVFMLSTF). Residues 208 to 222 (GGATMWDYTIPILEI) lie on the Lumenal side of the membrane. Residues 223-248 (KLKIVPVLGVVGGLIFSCSNYFHVIL) form a helical membrane-spanning segment. Residues 249–265 (HGGVGKNGSTIAGTSVL) are Cytoplasmic-facing. A helical transmembrane segment spans residues 266–281 (SPGLHIGLIIILAIMI). Over 282–293 (YKKSATNMFEKH) the chain is Lumenal. A helical transmembrane segment spans residues 294 to 316 (PCLYTLMFGCVFAKVAQKLVIAH). Residues 317 to 329 (MTKSELYLQDTVF) lie on the Cytoplasmic side of the membrane. Residues 330–339 (IGPGLLFLDQ) traverse the membrane as a helical segment. Topologically, residues 340–346 (YFNNFID) are lumenal. Residues 347 to 376 (EYVVLWIAMVISSFDMMIYFTSLCLQISRH) form a helical membrane-spanning segment. Over 377–398 (LHLNIFKTSCQQAPEQVYKHID) the chain is Cytoplasmic.

This sequence belongs to the CDP-alcohol phosphatidyltransferase class-I family. Mg(2+) serves as cofactor. The cofactor is Mn(2+). Expressed in brain, heart, lung, liver, spleen, intestine and muscle. Down-regulated in kidney of type 2 diabetic KK/Ta mice.

The protein resides in the golgi apparatus membrane. The enzyme catalyses CDP-choline + a 1,2-diacyl-sn-glycerol = a 1,2-diacyl-sn-glycero-3-phosphocholine + CMP + H(+). The catalysed reaction is 1-octadecanoyl-2-(5Z,8Z,11Z,14Z-eicosatetraenoyl)-sn-glycerol + CDP-choline = 1-octadecanoyl-2-(5Z,8Z,11Z,14Z-eicosatetraenoyl)-sn-glycero-3-phosphocholine + CMP + H(+). It catalyses the reaction 1-hexadecanoyl-2-(9Z-octadecenoyl)-sn-glycerol + CDP-choline = 1-hexadecanoyl-2-(9Z-octadecenoyl)-sn-glycero-3-phosphocholine + CMP + H(+). It carries out the reaction 1-hexadecanoyl-2-(4Z,7Z,10Z,13Z,16Z,19Z-docosahexaenoyl)-sn-glycerol + CDP-choline = 1-hexadecanoyl-2-(4Z,7Z,10Z,13Z,16Z,19Z-docosahexaenoyl)-sn-glycero-3-phosphocholine + CMP + H(+). The enzyme catalyses 1,2-dioctanoyl-sn-glycerol + CDP-choline = 1,2-dioctanoyl-sn-glycero-3-phosphocholine + CMP + H(+). The protein operates within phospholipid metabolism; phosphatidylcholine biosynthesis; phosphatidylcholine from phosphocholine: step 2/2. Functionally, catalyzes the final step of de novo phosphatidylcholine (PC) synthesis, i.e. the transfer of choline phosphate from CDP-choline to the free hydroxyl of a diacylglycerol (DAG), producing a PC. It thereby plays a central role in the formation and maintenance of vesicular membranes. The protein is Cholinephosphotransferase 1 of Mus musculus (Mouse).